We begin with the raw amino-acid sequence, 234 residues long: DEAD-box ATP-dependent RNA helicase 3 (234 aa).

The Q motif signature appears at 120–148 (LAVSRLGLPQKLVETLEKRGITKLFPIQR). The Helicase ATP-binding domain maps to 151–234 (LVPALEGRDI…RTVCVYGGVS (84 aa)). 164–171 (AKTGTGKT) contributes to the ATP binding site.

It belongs to the DEAD box helicase family. DDX21/DDX50 subfamily.

The chain is DEAD-box ATP-dependent RNA helicase 3 from Helianthus annuus (Common sunflower).